The primary structure comprises 440 residues: 6-phospho-alpha-glucosidase (440 aa).

4–70 (FSVVIAGGGS…PEIEFSYTTD (67 aa)) is an NAD(+) binding site. Substrate is bound by residues arginine 93 and asparagine 147. Cysteine 169 is a Mn(2+) binding site. The active-site Proton donor is aspartate 170. Residue histidine 200 coordinates Mn(2+). Tyrosine 263 serves as the catalytic Proton acceptor. Position 283 (arginine 283) interacts with substrate.

As to quaternary structure, homodimer. NAD(+) is required as a cofactor. Requires Mn(2+) as cofactor. It depends on Co(2+) as a cofactor. The cofactor is Ni(2+).

The enzyme catalyses alpha-maltose 6'-phosphate + H2O = D-glucose 6-phosphate + D-glucose. It participates in glycan biosynthesis; sucrose metabolism. In terms of biological role, is involved in the catabolism of alpha-glycosides accumulated via a phosphoenolpyruvate-dependent phosphotransferase system (PEP-PTS). Hydrolyzes a wide variety of 6-phospho-alpha-D-glucosides including maltose-6'-phosphate, isomaltose-6'-phosphate, maltitol-6-phosphate, trehalose-6-phosphate and the 6'-phosphorylated derivatives of the five linkage-isomeric alpha-D-glucosyl-D-fructoses: trehalulose-6'-phosphate, turanose-6'-phosphate, maltulose-6'-phosphate, leucrose-6'-phosphate, and palatinose-6'-phosphate. However, sucrose-6-phosphate is not a substrate for this enzyme. The chain is 6-phospho-alpha-glucosidase from Klebsiella pneumoniae.